Here is a 563-residue protein sequence, read N- to C-terminus: Probable CoA ligase CCL11 (563 aa).

Residues 195-203 (TSGTTSSPK), 328-333 (HGYGMT), Asp-426, 438-441 (IKDR), and Lys-534 contribute to the ATP site. The interval 263-328 (DGEIIFNLIR…TESLGFVISH (66 aa)) is SBD1. Residues 329-405 (GYGMTEMLGV…LKGSSIMLGY (77 aa)) are SBD2.

This sequence belongs to the ATP-dependent AMP-binding enzyme family.

The protein resides in the cytoplasm. It is found in the cytosol. The polypeptide is Probable CoA ligase CCL11 (Humulus lupulus (European hop)).